The primary structure comprises 648 residues: Adhesion G-protein coupled receptor G1 (648 aa).

The first 24 residues, 1-24, serve as a signal peptide directing secretion; that stretch reads MKQNPAKTARMWIIICLLFVLGQA. Residues 25–370 are Extracellular-facing; the sequence is TDNDRDFKMC…STVRHLKALT (346 aa). An intrachain disulfide couples Cys34 to Cys96. N-linked (GlcNAc...) asparagine glycosylation is found at Asn62, Asn91, Asn114, Asn146, Asn222, Asn262, and Asn286. An intrachain disulfide couples Cys127 to Cys176. Residues 214–361 form the GAIN-B domain; the sequence is MDEEFTGHNF…AILVQVEQKS (148 aa). 2 cysteine pairs are disulfide-bonded: Cys313–Cys343 and Cys331–Cys345. Positions 313 to 361 are GPS; the sequence is CVSWDTKQDNEVNWKDDGCDTVKINEEQTECHCNHLTYFAILVQVEQKS. Positions 349-361 are stachel; the sequence is TYFAILVQVEQKS. The chain crosses the membrane as a helical span at residues 371–391; that stretch reads FITAVGCAVSLVSCLVLFYWL. Topologically, residues 392-408 are cytoplasmic; it reads CKRRRGKKNQISLVHRG. A helical transmembrane segment spans residues 409–429; the sequence is LVVAIFLLCLFFILTGILANV. Residues 430–443 lie on the Extracellular side of the membrane; it reads ANETVCQLTGSLLH. N-linked (GlcNAc...) asparagine glycosylation is present at Asn431. A helical transmembrane segment spans residues 444 to 464; sequence YGLLSTLCWMAMEVFHTFLLV. The Cytoplasmic portion of the chain corresponds to 465 to 471; the sequence is RKVFNSP. The helical transmembrane segment at 472 to 492 threads the bilayer; the sequence is LPIWIFYLMGFGFPFLLVSIL. The Extracellular segment spans residues 493 to 530; it reads LSVGDIYGERKIKPSDDVNNPYRMCWMTEGDKSQLAHY. The helical transmembrane segment at 531–551 threads the bilayer; sequence IINIGLLAVVVSSGLVMLFLV. Residues 552–563 are Cytoplasmic-facing; the sequence is VREIRNRPDWKK. A helical membrane pass occupies residues 564–586; sequence IHVAFLSIWGLTCLYGTTWALGF. The Extracellular segment spans residues 587-595; that stretch reads LDFGPFSEV. The helical transmembrane segment at 596 to 618 threads the bilayer; it reads TLFLFCIINSLQGFFLMLRYYAL. The Cytoplasmic segment spans residues 619-648; that stretch reads ERMKKKDVSSSDGSSSGSSKQHMLQTNEKS.

Belongs to the G-protein coupled receptor 2 family. LN-TM7 subfamily. In terms of assembly, heterodimer of 2 chains generated by proteolytic processing; the large extracellular N-terminal fragment (ADGRG1 NT) and the membrane-bound C-terminal fragment (ADGRG1-CT) predominantly remain associated and non-covalently linked. Autoproteolytically cleaved into 2 fragments; the large extracellular N-terminal fragment (ADGRG1 NT) and the membrane-bound C-terminal fragment (ADGRG1 CT) predominantly remain associated and non-covalently linked.

It localises to the cell membrane. Forms a heterodimer of 2 chains generated by proteolytic processing that remain associated through non-covalent interactions mediated by the GAIN-B domain. In the inactivated receptor, the Stachel sequence (also named stalk) is embedded in the GAIN-B domain, where it adopts a beta-strand conformation. On activation, the Stachel moves into the 7 transmembrane region and adopts a twisted hook-shaped configuration that forms contacts within the receptor, leading to coupling of a G-alpha protein, which activates signaling. The cleaved GAIN-B and N-terminal domains can then dissociate from the rest of the receptor. Adhesion G-protein coupled receptor (aGPCR), which is involved in oligodendrocyte development and maintenance of peripheral myelin. Ligand binding causes a conformation change that triggers signaling via guanine nucleotide-binding proteins (G proteins) and modulates the activity of downstream effectors, such as RhoA pathway. Adgrg1 is coupled to G(12) and/or G(13) G proteins (gna12 and gna13, respectively) and mediates the activation Rho small GTPases. Adgrg1-dependent RhoA signaling promotes timely radial sorting of axons. Required to establish proper myelin thickness and facilitate organization of the myelin sheath in the mature peripheral nervous system. The chain is Adhesion G-protein coupled receptor G1 from Danio rerio (Zebrafish).